The sequence spans 314 residues: Ribosomal RNA small subunit methyltransferase H (314 aa).

S-adenosyl-L-methionine contacts are provided by residues 36–38 (GGH), D56, F80, D102, and Q109. Positions 278 to 300 (GGRSLKSIGKMKPSEEEVADNPR) are disordered. Positions 289–300 (KPSEEEVADNPR) are enriched in basic and acidic residues.

It belongs to the methyltransferase superfamily. RsmH family.

It localises to the cytoplasm. It catalyses the reaction cytidine(1402) in 16S rRNA + S-adenosyl-L-methionine = N(4)-methylcytidine(1402) in 16S rRNA + S-adenosyl-L-homocysteine + H(+). Specifically methylates the N4 position of cytidine in position 1402 (C1402) of 16S rRNA. The chain is Ribosomal RNA small subunit methyltransferase H from Photorhabdus laumondii subsp. laumondii (strain DSM 15139 / CIP 105565 / TT01) (Photorhabdus luminescens subsp. laumondii).